A 567-amino-acid polypeptide reads, in one-letter code: Chaperone ric-8 (567 aa).

It belongs to the synembryn family.

It is found in the cytoplasm. Its subcellular location is the cell cortex. Chaperone that specifically binds and folds some, but not all, nascent G alpha proteins prior to G protein heterotrimer formation, promoting their stability and activity. Also acts as a guanine nucleotide exchange factor (GEF) for G alpha proteins by stimulating exchange of bound GDP for free GTP. Able to facilitate synaptic transmission in the nervous system probably by activating G(q)-alpha (egl-30). Also able to activate the G(s)-alpha in synaptic signaling network. Plays a key role in asymmetric spindle positioning, a step for asymmetric cell division that generates cell diversity during development by activating G(i)-alpha protein goa-1 and gpa-16 independently of G-protein coupled receptors. While it acts as a GEF for goa-1, it has no GEF activity toward gpa-16. In addition to its GEF activity, it is required for cortical subcellular localization of G-alpha proteins such as gpa-16. Also required for the interaction of goa-1 and gpr-1/2, suggesting that it may act by generating G-alpha proteins free from G-beta-gamma subunits, enabling gpr-1/2 to mediate asymmetric cell division. The polypeptide is Chaperone ric-8 (ric-8) (Caenorhabditis briggsae).